The primary structure comprises 445 residues: Inward rectifier potassium channel 4 (445 aa).

The Cytoplasmic portion of the chain corresponds to 1–55 (MHGHNRNGQAHVPRRKRRNRFVKKNGQCNVYFANLSNKSQRYMADIFTTCVDTRW). Residues 56–80 (RYMLMIFSAAFLVSWLFFGLLFWWI) form a helical membrane-spanning segment. Residues 81–119 (AFFHGDLEASPSVPAVGGPGGNGGESPNAPKPCIMHVNG) are Extracellular-facing. The segment at residues 120 to 131 (FLGAFLFSVETQ) is an intramembrane region (helical; Pore-forming). The pore-forming intramembrane region spans 132–138 (TTIGYGF). The Selectivity filter motif lies at 133–138 (TIGYGF). At 139–147 (RCVTEECPL) the chain is on the extracellular side. Residues 148–169 (AVIAVVVQSIVGCVIDSFMIGT) traverse the membrane as a helical segment. The Cytoplasmic portion of the chain corresponds to 170–445 (IMAKMARPKK…NISYRRESRI (276 aa)). Residues 443–445 (SRI) carry the PDZ-binding motif.

It belongs to the inward rectifier-type potassium channel (TC 1.A.2.1) family. KCNJ4 subfamily. In terms of assembly, homomultimeric and heteromultimeric association with KCNJ2 and KCNJ12. Interacts with DLG2 and DLG4. Associates, via its PDZ-recognition domain, with a complex containing LIN7A, LIN7B, LIN7C, DLG1, CASK and APBA1. Interacts with TAX1BP3. TAX1BP3 competes with LIN7 family members for KCNJ4 binding. In terms of tissue distribution, highly expressed in the forebrain, moderately in skeletal muscle. Im olfactory bulb, specifically expressed at the postsynaptic membrane of dendritic spines of granule cells.

Its subcellular location is the cell membrane. It localises to the postsynaptic cell membrane. It is found in the cytoplasmic vesicle membrane. The catalysed reaction is K(+)(in) = K(+)(out). Functionally, inward rectifier potassium channels are characterized by a greater tendency to allow potassium to flow into the cell rather than out of it. Their voltage dependence is regulated by the concentration of extracellular potassium; as external potassium is raised, the voltage range of the channel opening shifts to more positive voltages. The inward rectification is mainly due to the blockage of outward current by internal magnesium. Can be blocked by extracellular barium and cesium. The sequence is that of Inward rectifier potassium channel 4 (Kcnj4) from Mus musculus (Mouse).